A 188-amino-acid polypeptide reads, in one-letter code: Adenine phosphoribosyltransferase (188 aa).

Belongs to the purine/pyrimidine phosphoribosyltransferase family. As to quaternary structure, homodimer.

The protein resides in the cytoplasm. It carries out the reaction AMP + diphosphate = 5-phospho-alpha-D-ribose 1-diphosphate + adenine. The protein operates within purine metabolism; AMP biosynthesis via salvage pathway; AMP from adenine: step 1/1. In terms of biological role, catalyzes a salvage reaction resulting in the formation of AMP, that is energically less costly than de novo synthesis. This is Adenine phosphoribosyltransferase from Frankia casuarinae (strain DSM 45818 / CECT 9043 / HFP020203 / CcI3).